The chain runs to 120 residues: Ribosome-binding factor A (120 aa).

Belongs to the RbfA family. As to quaternary structure, monomer. Binds 30S ribosomal subunits, but not 50S ribosomal subunits or 70S ribosomes.

The protein resides in the cytoplasm. In terms of biological role, one of several proteins that assist in the late maturation steps of the functional core of the 30S ribosomal subunit. Associates with free 30S ribosomal subunits (but not with 30S subunits that are part of 70S ribosomes or polysomes). Required for efficient processing of 16S rRNA. May interact with the 5'-terminal helix region of 16S rRNA. The polypeptide is Ribosome-binding factor A (Verminephrobacter eiseniae (strain EF01-2)).